Consider the following 338-residue polypeptide: Bacteriochlorophyllide d C-20 methyltransferase (338 aa).

Glu-147 contacts S-adenosyl-L-methionine. Residue His-150 coordinates substrate. S-adenosyl-L-methionine-binding positions include Gly-177, Asn-200, 227-228 (DI), and 242-243 (CR). Tyr-246 serves as the catalytic Nucleophile. His-290 lines the a bacteriochlorophyll d pocket.

This sequence belongs to the class I-like SAM-binding methyltransferase superfamily. Cation-independent O-methyltransferase family. Homodimer.

It carries out the reaction a bacteriochlorophyllide d + S-adenosyl-L-methionine = a bacteriochlorophyllide c + S-adenosyl-L-homocysteine + H(+). The protein operates within porphyrin-containing compound metabolism; bacteriochlorophyll biosynthesis (light-independent). In terms of biological role, involved in the biosynthesis of the major light-harvesting pigment bacteriochlorophyll c (BChlc), which confers a significant competitive advantage to green sulfur bacteria living at limiting red and near-infrared light intensities. Catalyzes the methylation at the C-20 position of the cyclic tetrapyrrole chlorin of bacteriochlorophyll d (BChld) to produce bacteriochlorophyll c (BChlc) using S-adenosylmethionine (SAM) as a methyl source. In Chlorobaculum tepidum (strain ATCC 49652 / DSM 12025 / NBRC 103806 / TLS) (Chlorobium tepidum), this protein is Bacteriochlorophyllide d C-20 methyltransferase.